Consider the following 63-residue polypeptide: MIVDKRHCLQAVQNYIVQINVTRTTKKRSLCCFFSTKISLFIILHLCLLVCLLLSFYFDFYPF.

Residues Ile-38–Phe-58 form a helical membrane-spanning segment.

It localises to the membrane. This is an uncharacterized protein from Saccharomyces cerevisiae (strain ATCC 204508 / S288c) (Baker's yeast).